Consider the following 167-residue polypeptide: Minor fimbrial protein PrsF (167 aa).

A signal peptide spans 1–18; that stretch reads MIRLSLFISLLLTSVAVL.

Its subcellular location is the secreted. The protein localises to the fimbrium. In terms of biological role, fimbriae (also called pili), polar filaments radiating from the surface of the bacterium to a length of 0.5-1.5 micrometers and numbering 100-300 per cell, enable bacteria to colonize the epithelium of specific host organs. The protein is Minor fimbrial protein PrsF (prsF) of Escherichia coli.